A 630-amino-acid polypeptide reads, in one-letter code: Betaine/ectoine transporter LcoP (630 aa).

The segment covering 1–13 (MSTNSGNNLPESQ) has biased composition (polar residues). The segment at 1–28 (MSTNSGNNLPESQESPEEPHYPHDTHPG) is disordered. A compositionally biased stretch (basic and acidic residues) spans 17–26 (EEPHYPHDTH). Helical transmembrane passes span 47 to 67 (TVFG…ISSP), 85 to 105 (TGWL…YIAF), 125 to 145 (FSWI…FFGP), 177 to 197 (FHWG…LAYS), 230 to 250 (MAII…AIQV), 267 to 287 (ILIA…VSGV), 299 to 319 (ISLT…LFLL), 354 to 374 (WTAF…MFIA), 385 to 405 (FALI…TIFG), 436 to 456 (LPLY…FFVT), 479 to 499 (LIVV…LLTG), and 510 to 530 (LTIL…IAFI). Residues 611–630 (WADGWTPESTEEGEVDAKKD) are disordered.

Belongs to the BCCT transporter (TC 2.A.15) family.

It localises to the cell membrane. With respect to regulation, uptake is activated by hyperosmotic stress. Shows a small but significant chill stimulation around 15 degrees Celsius. In terms of biological role, involved in the uptake of osmoprotectants. Can transport betaine and ectoine. Na(+) is probably the coupling ion. The protein is Betaine/ectoine transporter LcoP of Corynebacterium glutamicum (strain ATCC 13032 / DSM 20300 / JCM 1318 / BCRC 11384 / CCUG 27702 / LMG 3730 / NBRC 12168 / NCIMB 10025 / NRRL B-2784 / 534).